Here is an 84-residue protein sequence, read N- to C-terminus: uncharacterized protein (84 aa).

This is an uncharacterized protein from Helicobacter pylori (strain ATCC 700392 / 26695) (Campylobacter pylori).